The primary structure comprises 161 residues: Ureidoglycolate lyase (161 aa).

This sequence belongs to the ureidoglycolate lyase family. As to quaternary structure, homodimer. It depends on Ni(2+) as a cofactor.

The enzyme catalyses (S)-ureidoglycolate = urea + glyoxylate. It participates in nitrogen metabolism; (S)-allantoin degradation. Functionally, catalyzes the catabolism of the allantoin degradation intermediate (S)-ureidoglycolate, generating urea and glyoxylate. Involved in the utilization of allantoin as nitrogen source. In Rhodobacter capsulatus (strain ATCC BAA-309 / NBRC 16581 / SB1003), this protein is Ureidoglycolate lyase.